A 298-amino-acid chain; its full sequence is 4-diphosphocytidyl-2-C-methyl-D-erythritol kinase (298 aa).

Lysine 11 is an active-site residue. 94–104 is an ATP binding site; sequence PMGGGLGGGSS. Aspartate 136 is a catalytic residue.

It belongs to the GHMP kinase family. IspE subfamily.

The catalysed reaction is 4-CDP-2-C-methyl-D-erythritol + ATP = 4-CDP-2-C-methyl-D-erythritol 2-phosphate + ADP + H(+). The protein operates within isoprenoid biosynthesis; isopentenyl diphosphate biosynthesis via DXP pathway; isopentenyl diphosphate from 1-deoxy-D-xylulose 5-phosphate: step 3/6. Catalyzes the phosphorylation of the position 2 hydroxy group of 4-diphosphocytidyl-2C-methyl-D-erythritol. The chain is 4-diphosphocytidyl-2-C-methyl-D-erythritol kinase from Chromohalobacter salexigens (strain ATCC BAA-138 / DSM 3043 / CIP 106854 / NCIMB 13768 / 1H11).